Consider the following 593-residue polypeptide: Alanine--tRNA ligase (593 aa).

Residues His-456, His-460, Cys-558, and His-562 each contribute to the Zn(2+) site.

It belongs to the class-II aminoacyl-tRNA synthetase family. Requires Zn(2+) as cofactor.

The protein localises to the cytoplasm. It carries out the reaction tRNA(Ala) + L-alanine + ATP = L-alanyl-tRNA(Ala) + AMP + diphosphate. Its function is as follows. Catalyzes the attachment of alanine to tRNA(Ala) in a two-step reaction: alanine is first activated by ATP to form Ala-AMP and then transferred to the acceptor end of tRNA(Ala). Also edits incorrectly charged Ser-tRNA(Ala) and Gly-tRNA(Ala) via its editing domain. The protein is Alanine--tRNA ligase (alaS) of Borrelia hermsii (strain HS1 / DAH).